We begin with the raw amino-acid sequence, 183 residues long: Inner membrane-spanning protein YciB (183 aa).

The next 5 membrane-spanning stretches (helical) occupy residues 19 to 39 (LYGV…QLIV), 53 to 73 (IMGI…DLNF), 76 to 96 (WKVT…QFVF), 121 to 141 (LGWA…SYYF), and 151 to 171 (TFGF…YLYP).

It belongs to the YciB family.

The protein resides in the cell inner membrane. Plays a role in cell envelope biogenesis, maintenance of cell envelope integrity and membrane homeostasis. This is Inner membrane-spanning protein YciB from Actinobacillus pleuropneumoniae serotype 7 (strain AP76).